Reading from the N-terminus, the 227-residue chain is Cytochrome c oxidase subunit 2 (227 aa).

Topologically, residues methionine 1–serine 14 are mitochondrial intermembrane. A helical membrane pass occupies residues proline 15–methionine 45. Residues leucine 46–glutamine 59 are Mitochondrial matrix-facing. Residues glutamate 60–methionine 87 traverse the membrane as a helical segment. The Mitochondrial intermembrane portion of the chain corresponds to aspartate 88–valine 227. Residues histidine 161, cysteine 196, glutamate 198, cysteine 200, histidine 204, and methionine 207 each coordinate Cu cation. Glutamate 198 contributes to the Mg(2+) binding site.

Belongs to the cytochrome c oxidase subunit 2 family. Component of the cytochrome c oxidase (complex IV, CIV), a multisubunit enzyme composed of 14 subunits. The complex is composed of a catalytic core of 3 subunits MT-CO1, MT-CO2 and MT-CO3, encoded in the mitochondrial DNA, and 11 supernumerary subunits COX4I, COX5A, COX5B, COX6A, COX6B, COX6C, COX7A, COX7B, COX7C, COX8 and NDUFA4, which are encoded in the nuclear genome. The complex exists as a monomer or a dimer and forms supercomplexes (SCs) in the inner mitochondrial membrane with NADH-ubiquinone oxidoreductase (complex I, CI) and ubiquinol-cytochrome c oxidoreductase (cytochrome b-c1 complex, complex III, CIII), resulting in different assemblies (supercomplex SCI(1)III(2)IV(1) and megacomplex MCI(2)III(2)IV(2)). Found in a complex with TMEM177, COA6, COX18, COX20, SCO1 and SCO2. Interacts with TMEM177 in a COX20-dependent manner. Interacts with COX20. Interacts with COX16. The cofactor is Cu cation.

It is found in the mitochondrion inner membrane. The enzyme catalyses 4 Fe(II)-[cytochrome c] + O2 + 8 H(+)(in) = 4 Fe(III)-[cytochrome c] + 2 H2O + 4 H(+)(out). Component of the cytochrome c oxidase, the last enzyme in the mitochondrial electron transport chain which drives oxidative phosphorylation. The respiratory chain contains 3 multisubunit complexes succinate dehydrogenase (complex II, CII), ubiquinol-cytochrome c oxidoreductase (cytochrome b-c1 complex, complex III, CIII) and cytochrome c oxidase (complex IV, CIV), that cooperate to transfer electrons derived from NADH and succinate to molecular oxygen, creating an electrochemical gradient over the inner membrane that drives transmembrane transport and the ATP synthase. Cytochrome c oxidase is the component of the respiratory chain that catalyzes the reduction of oxygen to water. Electrons originating from reduced cytochrome c in the intermembrane space (IMS) are transferred via the dinuclear copper A center (CU(A)) of subunit 2 and heme A of subunit 1 to the active site in subunit 1, a binuclear center (BNC) formed by heme A3 and copper B (CU(B)). The BNC reduces molecular oxygen to 2 water molecules using 4 electrons from cytochrome c in the IMS and 4 protons from the mitochondrial matrix. This is Cytochrome c oxidase subunit 2 (MT-CO2) from Uromys caudimaculatus (Giant white-tailed rat).